A 160-amino-acid polypeptide reads, in one-letter code: SsrA-binding protein (160 aa).

The protein belongs to the SmpB family.

It is found in the cytoplasm. Functionally, required for rescue of stalled ribosomes mediated by trans-translation. Binds to transfer-messenger RNA (tmRNA), required for stable association of tmRNA with ribosomes. tmRNA and SmpB together mimic tRNA shape, replacing the anticodon stem-loop with SmpB. tmRNA is encoded by the ssrA gene; the 2 termini fold to resemble tRNA(Ala) and it encodes a 'tag peptide', a short internal open reading frame. During trans-translation Ala-aminoacylated tmRNA acts like a tRNA, entering the A-site of stalled ribosomes, displacing the stalled mRNA. The ribosome then switches to translate the ORF on the tmRNA; the nascent peptide is terminated with the 'tag peptide' encoded by the tmRNA and targeted for degradation. The ribosome is freed to recommence translation, which seems to be the essential function of trans-translation. The chain is SsrA-binding protein from Cronobacter sakazakii (strain ATCC BAA-894) (Enterobacter sakazakii).